A 350-amino-acid chain; its full sequence is uncharacterized protein (350 aa).

3 helical membrane passes run 10–30, 51–71, and 327–347; these read YSFI…EVIG, FAGI…VTLT, and ILSL…LKLF.

It belongs to the 1-acyl-sn-glycerol-3-phosphate acyltransferase family.

It is found in the endoplasmic reticulum membrane. This is an uncharacterized protein from Schizosaccharomyces pombe (strain 972 / ATCC 24843) (Fission yeast).